A 378-amino-acid chain; its full sequence is Zinc transporter 7 (378 aa).

The Cytoplasmic segment spans residues 1–37 (MLPLSIKDDEYKPPKFNLFGKISGWFRSILSDKTSRN). A helical membrane pass occupies residues 38–58 (LFFFLCLNLSFAFVELLYGIW). Residues 59 to 67 (SNCLGLISD) lie on the Lumenal side of the membrane. Residues 68–88 (SFHMFFDSTAILAGLAASVIS) traverse the membrane as a helical segment. Over 89 to 102 (KWRDNDAFSYGYVR) the chain is Cytoplasmic. A helical transmembrane segment spans residues 103 to 123 (AEVLAGFVNGLFLIFTAFFIF). Residues 124–140 (SEGVERALAPPDVHHER) lie on the Lumenal side of the membrane. The chain crosses the membrane as a helical span at residues 141 to 161 (LLLVSILGFVVNLVGIFVFNH). The tract at residues 161–220 (HGGHGHSHGSGHGHSHSLFNGALDHSHGHEDHCHSHEAKHGAAHSHDHDHAHGHGHLHSH) is his-rich loop. Residues 162-238 (GGHGHSHGSG…AGPSRQILQG (77 aa)) lie on the Cytoplasmic side of the membrane. Residues 186-223 (SHGHEDHCHSHEAKHGAAHSHDHDHAHGHGHLHSHDGP) show a composition bias toward basic and acidic residues. The tract at residues 186 to 224 (SHGHEDHCHSHEAKHGAAHSHDHDHAHGHGHLHSHDGPS) is disordered. Residues 239–259 (VFLHILADTLGSIGVIASAIM) form a helical membrane-spanning segment. The Lumenal portion of the chain corresponds to 260-264 (MQNFG). The chain crosses the membrane as a helical span at residues 265–285 (LMIADPICSILIAILIVVSVI). Residues 286-378 (PLLRESVGIL…LYVQIDFAAM (93 aa)) lie on the Cytoplasmic side of the membrane.

The protein belongs to the cation diffusion facilitator (CDF) transporter (TC 2.A.4) family. SLC30A subfamily. Homooligomer. In terms of tissue distribution, highly expressed in liver, spleen, duodenum and part of the jejunum of small intestine (at protein level). Moderately expressed in kidney, lung, and brain. Barely detectable in heart. In brain, expressed in cerebellum, cerebral cortex and hippocampus (at protein level).

The protein localises to the golgi apparatus membrane. It is found in the cytoplasmic vesicle. Its subcellular location is the golgi apparatus. The protein resides in the trans-Golgi network. It localises to the sarcoplasmic reticulum. The protein localises to the mitochondrion. It carries out the reaction Zn(2+)(in) = Zn(2+)(out). Its function is as follows. Zinc ion transporter mediating zinc entry from the cytosol into the lumen of organelles along the secretory pathway. By contributing to zinc ion homeostasis within the early secretory pathway, regulates the activation and folding of enzymes like alkaline phosphatases. The sequence is that of Zinc transporter 7 from Mus musculus (Mouse).